Consider the following 270-residue polypeptide: Cyclohexanol dehydrogenase (270 aa).

NAD(+)-binding residues include arginine 19, aspartate 40, aspartate 78, valine 79, asparagine 105, tyrosine 176, lysine 180, isoleucine 209, and threonine 211. Residue tyrosine 176 is the Proton acceptor of the active site.

This sequence belongs to the short-chain dehydrogenases/reductases (SDR) family. Homodimer.

Its subcellular location is the cytoplasm. It carries out the reaction cyclohexanol + NAD(+) = cyclohexanone + NADH + H(+). With respect to regulation, activity is enhanced by the addition of Ba(2+) and Mg(2+), but inhibited by the addition of Al(3+), Ca(2+), Co(2+), Cu(2+), Mn(2+) and Zn(2+). Its function is as follows. Catalyzes the oxidation of cyclohexanol to cyclohexanone. Can also use a broad range of other alcohols, including trans-cyclohexane-1,2-diol, trans-cyclopentane-1,2-diol, cyclopentanol, hexane-1,2-diol, ethanol, 1-propanol, 1-butanol, 1-pentanol and 1-hexanol. In Rhodococcus sp. (strain TK6), this protein is Cyclohexanol dehydrogenase.